The primary structure comprises 576 residues: Zn(2)-C6 fungal-type transcription factor mpsE (576 aa).

Positions 15-46 (CDRCRSHKLKCPQQPSTATGACQRCTRAKAQC) form a DNA-binding region, zn(2)-C6 fungal-type. Over residues 47 to 61 (TFSPRSRAIKNTQDG) the composition is skewed to polar residues. Disordered stretches follow at residues 47-123 (TFSP…GTFD), 334-369 (VAHAGHPPPPHLSHHRHCQPSPPGSLPTPTSRSSTA), and 404-424 (HPAPSHSSARHRHSRSTLHRR). Low complexity predominate over residues 95–109 (PPQQQQSDQQKPSGS).

The protein resides in the nucleus. Its function is as follows. Transcription factor; part of the gene cluster that mediates the biosynthesis of macrophasetins, 3-decalinoyltetramic acids (DTAs) which feature a tetramate (pyrrolidine-2,4-dione) unit connected to a decalin fragment and that have potent bioactivities. In Macrophomina phaseolina (strain MS6) (Charcoal rot fungus), this protein is Zn(2)-C6 fungal-type transcription factor mpsE.